A 158-amino-acid chain; its full sequence is Small ribosomal subunit protein uS15 (158 aa).

Positions 1–18 are enriched in basic residues; sequence MARMHARKRGKSGSKRPP. The tract at residues 1–21 is disordered; sequence MARMHARKRGKSGSKRPPRTA.

The protein belongs to the universal ribosomal protein uS15 family. As to quaternary structure, part of the 30S ribosomal subunit.

This chain is Small ribosomal subunit protein uS15, found in Pyrococcus abyssi (strain GE5 / Orsay).